Reading from the N-terminus, the 56-residue chain is MLRWTITFLVIALIAAVLGFGGIAGAAAGIAKIIFFIFLILLVISLVSGALRGKKP.

2 helical membrane-spanning segments follow: residues 6-26 and 27-47; these read ITFL…IAGA and AAGI…ISLV.

This sequence belongs to the UPF0391 family.

It localises to the cell membrane. In Pseudoalteromonas translucida (strain TAC 125), this protein is UPF0391 membrane protein PSHAa0537.